Consider the following 209-residue polypeptide: 3-demethoxyubiquinol 3-hydroxylase (209 aa).

Residues Glu-58, Glu-88, His-91, Glu-140, Glu-172, and His-175 each contribute to the Fe cation site.

Belongs to the COQ7 family. Fe cation serves as cofactor.

The protein resides in the cell membrane. It catalyses the reaction a 5-methoxy-2-methyl-3-(all-trans-polyprenyl)benzene-1,4-diol + AH2 + O2 = a 3-demethylubiquinol + A + H2O. It functions in the pathway cofactor biosynthesis; ubiquinone biosynthesis. Its function is as follows. Catalyzes the hydroxylation of 2-nonaprenyl-3-methyl-6-methoxy-1,4-benzoquinol during ubiquinone biosynthesis. This chain is 3-demethoxyubiquinol 3-hydroxylase, found in Polynucleobacter asymbioticus (strain DSM 18221 / CIP 109841 / QLW-P1DMWA-1) (Polynucleobacter necessarius subsp. asymbioticus).